The sequence spans 101 residues: uncharacterized protein (101 aa).

The first 25 residues, 1–25, serve as a signal peptide directing secretion; that stretch reads MISIPFRSTMSRTLVFIILPTVLSC.

This is an uncharacterized protein from Saccharomyces cerevisiae (strain ATCC 204508 / S288c) (Baker's yeast).